The primary structure comprises 117 residues: Mediator of RNA polymerase II transcription subunit 11 (117 aa).

N-acetylalanine is present on Ala-2.

The protein belongs to the Mediator complex subunit 11 family. Component of the Mediator complex, which is composed of MED1, MED4, MED6, MED7, MED8, MED9, MED10, MED11, MED12, MED13, MED13L, MED14, MED15, MED16, MED17, MED18, MED19, MED20, MED21, MED22, MED23, MED24, MED25, MED26, MED27, MED29, MED30, MED31, CCNC, CDK8 and CDC2L6/CDK11. The MED12, MED13, CCNC and CDK8 subunits form a distinct module termed the CDK8 module. Mediator containing the CDK8 module is less active than Mediator lacking this module in supporting transcriptional activation. Individual preparations of the Mediator complex lacking one or more distinct subunits have been variously termed ARC, CRSP, DRIP, PC2, SMCC and TRAP.

Its subcellular location is the nucleus. In terms of biological role, component of the Mediator complex, a coactivator involved in the regulated transcription of nearly all RNA polymerase II-dependent genes. Mediator functions as a bridge to convey information from gene-specific regulatory proteins to the basal RNA polymerase II transcription machinery. Mediator is recruited to promoters by direct interactions with regulatory proteins and serves as a scaffold for the assembly of a functional pre-initiation complex with RNA polymerase II and the general transcription factors. This Bos taurus (Bovine) protein is Mediator of RNA polymerase II transcription subunit 11 (MED11).